The following is a 1050-amino-acid chain: Self-sufficient cytochrome P450 monooxygenase CYP505E5 (1050 aa).

Cys-405 is a binding site for heme. The tract at residues 467–491 (RRSMLVARDGSSGESSNHLAEARGD) is disordered. The region spanning 500–641 (VSFFYGSNSG…DLEAWEETSL (142 aa)) is the Flavodoxin-like domain. FMN-binding positions include 506 to 510 (SNSGT) and 585 to 617 (VFGCGHHDWTQTFYRIPILIDDLMHKAGATRLA). An FAD-binding FR-type domain is found at 679–907 (KGLIEAKVTA…RPAKESFHLP (229 aa)).

In the N-terminal section; belongs to the cytochrome P450 family. FAD is required as a cofactor. The cofactor is FMN. It depends on heme as a cofactor.

It catalyses the reaction 2 oxidized [cytochrome P450] + NADPH = 2 reduced [cytochrome P450] + NADP(+) + H(+). The catalysed reaction is an organic molecule + reduced [NADPH--hemoprotein reductase] + O2 = an alcohol + oxidized [NADPH--hemoprotein reductase] + H2O + H(+). The enzyme catalyses dodecanoate + reduced [NADPH--hemoprotein reductase] + O2 = 5-hydroxydodecanoate + oxidized [NADPH--hemoprotein reductase] + H2O + H(+). It carries out the reaction tetradecanoate + reduced [NADPH--hemoprotein reductase] + O2 = 7-hydroxytetradecanoate + oxidized [NADPH--hemoprotein reductase] + H2O + H(+). It catalyses the reaction dodecan-1-ol + reduced [NADPH--hemoprotein reductase] + O2 = 1,5-dodecanediol + oxidized [NADPH--hemoprotein reductase] + H2O + H(+). The catalysed reaction is dodecan-1-ol + reduced [NADPH--hemoprotein reductase] + O2 = 1,4-dodecanediol + oxidized [NADPH--hemoprotein reductase] + H2O + H(+). The enzyme catalyses dodecan-1-ol + reduced [NADPH--hemoprotein reductase] + O2 = 1,6-dodecanediol + oxidized [NADPH--hemoprotein reductase] + H2O + H(+). Functionally, self-sufficient cytochrome P450 monooxygenase that catalyzes the regioselective in-chain hydroxylation of alkanes, fatty alcohols, and fatty acids at the omega-7 position. Performs hydroxylation of C10-C16 n-alkanes and C12 and C14 fatty alcohols; and thereby enables the one step biocatalytic synthesis of rare alcohols such as 5-dodecanol and 7-tetradecanol. Converts 1-dodecanol into 1,5-dodecanediol as major product with very little sub-terminally hydroxylated products with the 1,4-dodecanediol and 1,6-dodecanediol more abundant. Converts dodecanoic acid to 5-hydroxydodecanoic acid which can be further converted into delta-dodecalactone by lactonization of the 5-hydroxy acid at low pH. Also gives sub-terminal hydroxylation of dodecanoic acid with 9-hydroxydodecanoic acid being the second most abundant product. The protein is Self-sufficient cytochrome P450 monooxygenase CYP505E5 of Aspergillus niger.